Here is a 368-residue protein sequence, read N- to C-terminus: Phosphoserine aminotransferase (368 aa).

Residue Arg44 participates in L-glutamate binding. Pyridoxal 5'-phosphate is bound by residues 78-79 (AT), Trp104, Thr157, Asp179, and Gln202. Lys203 carries the post-translational modification N6-(pyridoxal phosphate)lysine. 244–245 (NT) contributes to the pyridoxal 5'-phosphate binding site.

It belongs to the class-V pyridoxal-phosphate-dependent aminotransferase family. SerC subfamily. As to quaternary structure, homodimer. Pyridoxal 5'-phosphate serves as cofactor.

Its subcellular location is the cytoplasm. The enzyme catalyses O-phospho-L-serine + 2-oxoglutarate = 3-phosphooxypyruvate + L-glutamate. It carries out the reaction 4-(phosphooxy)-L-threonine + 2-oxoglutarate = (R)-3-hydroxy-2-oxo-4-phosphooxybutanoate + L-glutamate. Its pathway is amino-acid biosynthesis; L-serine biosynthesis; L-serine from 3-phospho-D-glycerate: step 2/3. It functions in the pathway cofactor biosynthesis; pyridoxine 5'-phosphate biosynthesis; pyridoxine 5'-phosphate from D-erythrose 4-phosphate: step 3/5. Functionally, catalyzes the reversible conversion of 3-phosphohydroxypyruvate to phosphoserine and of 3-hydroxy-2-oxo-4-phosphonooxybutanoate to phosphohydroxythreonine. This chain is Phosphoserine aminotransferase, found in Neisseria gonorrhoeae (strain ATCC 700825 / FA 1090).